Here is a 256-residue protein sequence, read N- to C-terminus: Beta-fibrinogenase-like (256 aa).

The signal sequence occupies residues 1–18 (MVLIKVLANLLVLQLSYA). The propeptide occupies 19–24 (QKSSEL). In terms of domain architecture, Peptidase S1 spans 25-247 (VVGGDECNIN…YTDWIQSIIA (223 aa)). 6 cysteine pairs are disulfide-bonded: cysteine 31–cysteine 161, cysteine 49–cysteine 65, cysteine 96–cysteine 254, cysteine 140–cysteine 208, cysteine 172–cysteine 187, and cysteine 198–cysteine 223. An N-linked (GlcNAc...) asparagine glycan is attached at asparagine 44. Histidine 64 acts as the Charge relay system in catalysis. N-linked (GlcNAc...) asparagine glycosylation is found at asparagine 78 and asparagine 101. The active-site Charge relay system is aspartate 108. Asparagine 152 is a glycosylation site (N-linked (GlcNAc...) asparagine). Catalysis depends on serine 202, which acts as the Charge relay system.

This sequence belongs to the peptidase S1 family. Snake venom subfamily. In terms of assembly, monomer. Expressed by the venom gland.

The protein localises to the secreted. Its function is as follows. Snake venom serine protease that has fibrinogenolytic activities by hydrolyzing the beta chain of fibrinogen (FGB). Typical arginine esterase which hydrolyzes esters and amides of arginine. The chain is Beta-fibrinogenase-like from Daboia siamensis (Eastern Russel's viper).